Here is a 274-residue protein sequence, read N- to C-terminus: 2,3,4,5-tetrahydropyridine-2,6-dicarboxylate N-succinyltransferase (274 aa).

Belongs to the transferase hexapeptide repeat family.

The protein resides in the cytoplasm. The catalysed reaction is (S)-2,3,4,5-tetrahydrodipicolinate + succinyl-CoA + H2O = (S)-2-succinylamino-6-oxoheptanedioate + CoA. It participates in amino-acid biosynthesis; L-lysine biosynthesis via DAP pathway; LL-2,6-diaminopimelate from (S)-tetrahydrodipicolinate (succinylase route): step 1/3. The sequence is that of 2,3,4,5-tetrahydropyridine-2,6-dicarboxylate N-succinyltransferase from Erwinia tasmaniensis (strain DSM 17950 / CFBP 7177 / CIP 109463 / NCPPB 4357 / Et1/99).